The chain runs to 675 residues: MESSVAPFPHRRTHLPNRNYRSLLYHFCSSFDREPQISLATPAVLQELVLRTEIAQESPGETCEPPENLSITESKLNGVSGDSSGEKVETISQEKSLMLGDICDGIDLQDASVVSRHTDFFDSFELMINETQDSVPESCVNLFEALDVNDYDIVQNVLEKPNIATQVQVDPVESEKKAEEVPKSVESNEVISSGVLEACNGTVQREMELEKPVDNSPVLVDSVSRIVGGDDVEEGEISGDDNDDMLVEDDETVERHEEYQVSQDGTGNSHLTSHKSFGVEVMNVDNQAKKIDQTFSNEAKMDPGTSIKKRSAPSKDAKARKRAKARIKRAQERIALGVKKLKLKPVAPKPKPIKYCRHYLKGRCHEGDKCKFSHDTIPETKCSPCCYFATQSCMKGDDCPFDHDLSKYPCNNFITKGFCYRGDSCLFSHKGTPQSASDTPSANVTVSSTKITAASFSPQKTKKQSVRDAIAKLPAIQARVSSSVAFLKPSSHSNQRNSSDASSSKINEHVTPPQVPPLRKPSVAPKGMSFLSLDKTSQEDTVKASSASKPNTDNSDSQTLKQSQQGSFLPLGPPKGISFLSFASEEQKTLNREPQKPASSKNLKTTPSSHIQSSLLSAMKLAAEFESAKVERGNNDPTEAVNKSNVTVDTAVTRNSGNISSKILEFLSSFSHGKN.

The tract at residues 294–320 is disordered; that stretch reads TFSNEAKMDPGTSIKKRSAPSKDAKAR. The segment covering 307 to 320 has biased composition (basic residues); the sequence is IKKRSAPSKDAKAR. Residues 314–342 adopt a coiled-coil conformation; that stretch reads SKDAKARKRAKARIKRAQERIALGVKKLK. 3 C3H1-type zinc fingers span residues 350-377, 384-406, and 409-432; these read PKPIKYCRHYLKGRCHEGDKCKFSHDTI, PCCYFATQSCMKGDDCPFDHDLS, and PCNNFITKGFCYRGDSCLFSHKGT. 2 disordered regions span residues 487-572 and 586-612; these read LKPS…LPLG and EQKTLNREPQKPASSKNLKTTPSSHIQ. A compositionally biased stretch (low complexity) spans 490 to 504; the sequence is SSHSNQRNSSDASSS. A compositionally biased stretch (polar residues) spans 543–567; the sequence is KASSASKPNTDNSDSQTLKQSQQGS. The span at 586 to 595 shows a compositional bias: basic and acidic residues; it reads EQKTLNREPQ. Positions 597–612 are enriched in polar residues; it reads PASSKNLKTTPSSHIQ.

Its function is as follows. Possesses RNA-binding and ribonuclease activities in vitro. The polypeptide is Zinc finger CCCH domain-containing protein 65 (EMB1789) (Arabidopsis thaliana (Mouse-ear cress)).